The chain runs to 172 residues: Trypsin inhibitor DE-3 (172 aa).

2 disulfide bridges follow: Cys39–Cys83 and Cys132–Cys139.

This sequence belongs to the protease inhibitor I3 (leguminous Kunitz-type inhibitor) family.

Functionally, inhibition of trypsin. The sequence is that of Trypsin inhibitor DE-3 from Erythrina caffra (Kaffir tree).